A 336-amino-acid chain; its full sequence is Calcium-gated potassium channel MthK (336 aa).

Topologically, residues 1-20 (MVLVIEIIRKHLPRVLKVPA) are cytoplasmic. A helical membrane pass occupies residues 21–41 (TRILLLVLAVIIYGTAGFHFI). Topologically, residues 42 to 48 (EGESWTV) are extracellular. Positions 49-58 (SLYWTFVTIA) form an intramembrane region, helical; Pore-forming. Positions 59–64 (TVGYGD) form an intramembrane region, pore-forming. Positions 59 to 64 (TVGYGD) match the Selectivity filter motif. Over 65-69 (YSPST) the chain is Extracellular. Residues 70–95 (PLGMYFTVTLIVLGIGTFAVAVERLL) form a helical membrane-spanning segment. The Cytoplasmic portion of the chain corresponds to 96 to 106 (EFLINREQMKL). In terms of domain architecture, RCK N-terminal spans 115–230 (SRHVVICGWS…RMAGADQVIS (116 aa)). Positions 184, 210, and 212 each coordinate Ca(2+). The 85-residue stretch at 252–336 (VQDVLAEEST…IERLKNYISA (85 aa)) folds into the RCK C-terminal domain.

As to quaternary structure, homotetramer.

It is found in the cell membrane. Functionally, calcium-gated potassium channel. This Methanothermobacter thermautotrophicus (strain ATCC 29096 / DSM 1053 / JCM 10044 / NBRC 100330 / Delta H) (Methanobacterium thermoautotrophicum) protein is Calcium-gated potassium channel MthK (mthK).